Reading from the N-terminus, the 184-residue chain is MVKANYIRAGRLVRIIRGPRQDRVGVIVDIVDANRVLVENPSDVKMWRHVQSLKNVEPLRLCVPISRNCSSKVLKEAMATAKTLEKYANTKSAIRIAAKKAFAESTDFERYQLRVAKRSRAYWSRKIFDENDKKNPVSWHKVALKKLQKNAKKVDSTPAAKKRIEKARAARKAKPTAAKEKSKK.

Residues 149-184 (KNAKKVDSTPAAKKRIEKARAARKAKPTAAKEKSKK) are disordered. The span at 160-174 (AKKRIEKARAARKAK) shows a compositional bias: basic residues.

The protein belongs to the eukaryotic ribosomal protein eL14 family.

The chain is Large ribosomal subunit protein eL14 from Trypanosoma congolense.